The primary structure comprises 761 residues: Phosphoribosylformylglycinamidine synthase subunit PurL (761 aa).

H49 is a catalytic residue. The ATP site is built by Y52 and K92. E94 provides a ligand contact to Mg(2+). Substrate is bound by residues 95–98 and R117; that span reads SHNH. Residue H96 is the Proton acceptor of the active site. D118 serves as a coordination point for Mg(2+). Q241 contributes to the substrate binding site. Mg(2+) is bound at residue D269. 318 to 320 provides a ligand contact to substrate; sequence ESQ. ATP-binding residues include N502 and G539. N540 provides a ligand contact to Mg(2+). Residue S542 coordinates substrate.

The protein belongs to the FGAMS family. In terms of assembly, monomer. Part of the FGAM synthase complex composed of 1 PurL, 1 PurQ and 2 PurS subunits.

It is found in the cytoplasm. It catalyses the reaction N(2)-formyl-N(1)-(5-phospho-beta-D-ribosyl)glycinamide + L-glutamine + ATP + H2O = 2-formamido-N(1)-(5-O-phospho-beta-D-ribosyl)acetamidine + L-glutamate + ADP + phosphate + H(+). It functions in the pathway purine metabolism; IMP biosynthesis via de novo pathway; 5-amino-1-(5-phospho-D-ribosyl)imidazole from N(2)-formyl-N(1)-(5-phospho-D-ribosyl)glycinamide: step 1/2. In terms of biological role, part of the phosphoribosylformylglycinamidine synthase complex involved in the purines biosynthetic pathway. Catalyzes the ATP-dependent conversion of formylglycinamide ribonucleotide (FGAR) and glutamine to yield formylglycinamidine ribonucleotide (FGAM) and glutamate. The FGAM synthase complex is composed of three subunits. PurQ produces an ammonia molecule by converting glutamine to glutamate. PurL transfers the ammonia molecule to FGAR to form FGAM in an ATP-dependent manner. PurS interacts with PurQ and PurL and is thought to assist in the transfer of the ammonia molecule from PurQ to PurL. The chain is Phosphoribosylformylglycinamidine synthase subunit PurL from Chlorobium luteolum (strain DSM 273 / BCRC 81028 / 2530) (Pelodictyon luteolum).